Reading from the N-terminus, the 176-residue chain is Large ribosomal subunit protein uL10 (176 aa).

Belongs to the universal ribosomal protein uL10 family. In terms of assembly, part of the ribosomal stalk of the 50S ribosomal subunit. The N-terminus interacts with L11 and the large rRNA to form the base of the stalk. The C-terminus forms an elongated spine to which L12 dimers bind in a sequential fashion forming a multimeric L10(L12)X complex.

Functionally, forms part of the ribosomal stalk, playing a central role in the interaction of the ribosome with GTP-bound translation factors. The chain is Large ribosomal subunit protein uL10 from Sorangium cellulosum (strain So ce56) (Polyangium cellulosum (strain So ce56)).